Reading from the N-terminus, the 503-residue chain is ATP synthase subunit alpha (503 aa).

Residue 170–177 (GDKQTGKT) coordinates ATP.

Belongs to the ATPase alpha/beta chains family. As to quaternary structure, F-type ATPases have 2 components, CF(1) - the catalytic core - and CF(0) - the membrane proton channel. CF(1) has five subunits: alpha(3), beta(3), gamma(1), delta(1), epsilon(1). CF(0) has three main subunits: a(1), b(2) and c(9-12). The alpha and beta chains form an alternating ring which encloses part of the gamma chain. CF(1) is attached to CF(0) by a central stalk formed by the gamma and epsilon chains, while a peripheral stalk is formed by the delta and b chains.

The protein resides in the cell inner membrane. The enzyme catalyses ATP + H2O + 4 H(+)(in) = ADP + phosphate + 5 H(+)(out). In terms of biological role, produces ATP from ADP in the presence of a proton gradient across the membrane. The alpha chain is a regulatory subunit. In Helicobacter pylori (strain P12), this protein is ATP synthase subunit alpha.